The chain runs to 84 residues: Small ribosomal subunit protein eS27 (84 aa).

The C4-type zinc-finger motif lies at 38–60; sequence CPKCGATTTTFSHAHRQILCQKC.

Belongs to the eukaryotic ribosomal protein eS27 family. As to quaternary structure, component of the small ribosomal subunit. Requires Zn(2+) as cofactor.

It localises to the cytoplasm. Component of the small ribosomal subunit. The ribosome is a large ribonucleoprotein complex responsible for the synthesis of proteins in the cell. Required for proper rRNA processing and maturation of 18S rRNAs. The protein is Small ribosomal subunit protein eS27 (RPS27) of Entamoeba histolytica (strain ATCC 30459 / HM-1:IMSS / ABRM).